The sequence spans 382 residues: Glutamine synthetase cytosolic isozyme (382 aa).

The 83-residue stretch at 36 to 118 (GKICAEYVWI…VMCDCYEPPK (83 aa)) folds into the GS beta-grasp domain. The region spanning 135-382 (TRFACAEVME…RLIVETTILL (248 aa)) is the GS catalytic domain.

Belongs to the glutamine synthetase family. As to quaternary structure, homooctamer.

The protein localises to the cytoplasm. It carries out the reaction L-glutamate + NH4(+) + ATP = L-glutamine + ADP + phosphate + H(+). This chain is Glutamine synthetase cytosolic isozyme (GLN1), found in Chlamydomonas reinhardtii (Chlamydomonas smithii).